The sequence spans 506 residues: Aldehyde dehydrogenase (506 aa).

218–224 (GFGLEAG) serves as a coordination point for NAD(+). Active-site residues include Glu-262 and Cys-301.

The protein belongs to the aldehyde dehydrogenase family.

It carries out the reaction an aldehyde + NAD(+) + H2O = a carboxylate + NADH + 2 H(+). This chain is Aldehyde dehydrogenase, found in Rhodospirillum rubrum (strain ATCC 11170 / ATH 1.1.1 / DSM 467 / LMG 4362 / NCIMB 8255 / S1).